We begin with the raw amino-acid sequence, 364 residues long: Aminomethyltransferase (364 aa).

The protein belongs to the GcvT family. The glycine cleavage system is composed of four proteins: P, T, L and H.

The catalysed reaction is N(6)-[(R)-S(8)-aminomethyldihydrolipoyl]-L-lysyl-[protein] + (6S)-5,6,7,8-tetrahydrofolate = N(6)-[(R)-dihydrolipoyl]-L-lysyl-[protein] + (6R)-5,10-methylene-5,6,7,8-tetrahydrofolate + NH4(+). The glycine cleavage system catalyzes the degradation of glycine. The chain is Aminomethyltransferase from Desulforamulus reducens (strain ATCC BAA-1160 / DSM 100696 / MI-1) (Desulfotomaculum reducens).